A 108-amino-acid polypeptide reads, in one-letter code: UPF0235 protein RB8260 (108 aa).

Belongs to the UPF0235 family.

This Rhodopirellula baltica (strain DSM 10527 / NCIMB 13988 / SH1) protein is UPF0235 protein RB8260.